A 192-amino-acid polypeptide reads, in one-letter code: Putative 3-methyladenine DNA glycosylase (192 aa).

Belongs to the DNA glycosylase MPG family.

The chain is Putative 3-methyladenine DNA glycosylase from Methanoculleus marisnigri (strain ATCC 35101 / DSM 1498 / JR1).